A 210-amino-acid polypeptide reads, in one-letter code: 23.5 kDa heat shock protein, mitochondrial (210 aa).

Residues 1-20 (MASSSALALRRLLSSSTVAV) constitute a mitochondrion transit peptide. One can recognise a sHSP domain in the interval 102-210 (MGASGVRRGW…RNNIRHINVD (109 aa)).

This sequence belongs to the small heat shock protein (HSP20) family. May form oligomeric structures.

It localises to the mitochondrion. The chain is 23.5 kDa heat shock protein, mitochondrial (HSP23.5) from Arabidopsis thaliana (Mouse-ear cress).